Consider the following 52-residue polypeptide: ATP synthase protein 8 (52 aa).

Residues 6 to 26 (PLLWLNLFLMFSATFVMFIVL) form a helical membrane-spanning segment.

Belongs to the ATPase protein 8 family. F-type ATPases have 2 components, CF(1) - the catalytic core - and CF(0) - the membrane proton channel.

It localises to the mitochondrion membrane. Functionally, mitochondrial membrane ATP synthase (F(1)F(0) ATP synthase or Complex V) produces ATP from ADP in the presence of a proton gradient across the membrane which is generated by electron transport complexes of the respiratory chain. F-type ATPases consist of two structural domains, F(1) - containing the extramembraneous catalytic core and F(0) - containing the membrane proton channel, linked together by a central stalk and a peripheral stalk. During catalysis, ATP synthesis in the catalytic domain of F(1) is coupled via a rotary mechanism of the central stalk subunits to proton translocation. Part of the complex F(0) domain. Minor subunit located with subunit a in the membrane. This Penaeus monodon (Giant tiger prawn) protein is ATP synthase protein 8 (MT-ATP8).